The chain runs to 447 residues: Argininosuccinate synthase (447 aa).

Residues 17 to 25 and Ala43 each bind ATP; that span reads AFSGGLDTS. Tyr99 contacts L-citrulline. Positions 129 and 131 each coordinate ATP. Thr131, Asn135, and Asp136 together coordinate L-aspartate. Residue Asn135 participates in L-citrulline binding. Residue Asp136 coordinates ATP. 2 residues coordinate L-citrulline: Arg139 and Ser192. Asp194 serves as a coordination point for ATP. Residues Thr201, Glu203, and Glu280 each coordinate L-citrulline.

The protein belongs to the argininosuccinate synthase family. Type 2 subfamily. As to quaternary structure, homotetramer.

It is found in the cytoplasm. The enzyme catalyses L-citrulline + L-aspartate + ATP = 2-(N(omega)-L-arginino)succinate + AMP + diphosphate + H(+). It functions in the pathway amino-acid biosynthesis; L-arginine biosynthesis; L-arginine from L-ornithine and carbamoyl phosphate: step 2/3. In Salmonella newport (strain SL254), this protein is Argininosuccinate synthase.